Consider the following 199-residue polypeptide: dITP/XTP pyrophosphatase (199 aa).

Residue 9–14 (TGNKGK) participates in substrate binding. Mg(2+) is bound by residues Glu-41 and Asp-70. Asp-70 acts as the Proton acceptor in catalysis. Substrate contacts are provided by residues Ser-71, 157–160 (FGYD), Lys-180, and 185–186 (HR).

Belongs to the HAM1 NTPase family. As to quaternary structure, homodimer. It depends on Mg(2+) as a cofactor.

The enzyme catalyses XTP + H2O = XMP + diphosphate + H(+). It catalyses the reaction dITP + H2O = dIMP + diphosphate + H(+). It carries out the reaction ITP + H2O = IMP + diphosphate + H(+). Functionally, pyrophosphatase that catalyzes the hydrolysis of nucleoside triphosphates to their monophosphate derivatives, with a high preference for the non-canonical purine nucleotides XTP (xanthosine triphosphate), dITP (deoxyinosine triphosphate) and ITP. Seems to function as a house-cleaning enzyme that removes non-canonical purine nucleotides from the nucleotide pool, thus preventing their incorporation into DNA/RNA and avoiding chromosomal lesions. The polypeptide is dITP/XTP pyrophosphatase (Mannheimia succiniciproducens (strain KCTC 0769BP / MBEL55E)).